The sequence spans 467 residues: Plasma alpha-L-fucosidase (467 aa).

The signal sequence occupies residues 1-28; sequence MRPQELPRLAFPLLLLLLLLLPPPPCPA. N-linked (GlcNAc...) asparagine glycans are attached at residues asparagine 171 and asparagine 239. Serine 301 is modified (phosphoserine; by FAM20C). N-linked (GlcNAc...) asparagine glycosylation is present at asparagine 377.

This sequence belongs to the glycosyl hydrolase 29 family. As to quaternary structure, homotetramer.

The protein resides in the secreted. It catalyses the reaction an alpha-L-fucoside + H2O = L-fucose + an alcohol. Alpha-L-fucosidase is responsible for hydrolyzing the alpha-1,6-linked fucose joined to the reducing-end N-acetylglucosamine of the carbohydrate moieties of glycoproteins. In Homo sapiens (Human), this protein is Plasma alpha-L-fucosidase (FUCA2).